Reading from the N-terminus, the 257-residue chain is Imidazole glycerol phosphate synthase subunit HisF (257 aa).

Residues Asp12 and Asp131 contribute to the active site.

Belongs to the HisA/HisF family. In terms of assembly, heterodimer of HisH and HisF.

The protein resides in the cytoplasm. The enzyme catalyses 5-[(5-phospho-1-deoxy-D-ribulos-1-ylimino)methylamino]-1-(5-phospho-beta-D-ribosyl)imidazole-4-carboxamide + L-glutamine = D-erythro-1-(imidazol-4-yl)glycerol 3-phosphate + 5-amino-1-(5-phospho-beta-D-ribosyl)imidazole-4-carboxamide + L-glutamate + H(+). It functions in the pathway amino-acid biosynthesis; L-histidine biosynthesis; L-histidine from 5-phospho-alpha-D-ribose 1-diphosphate: step 5/9. Its function is as follows. IGPS catalyzes the conversion of PRFAR and glutamine to IGP, AICAR and glutamate. The HisF subunit catalyzes the cyclization activity that produces IGP and AICAR from PRFAR using the ammonia provided by the HisH subunit. The sequence is that of Imidazole glycerol phosphate synthase subunit HisF from Saccharophagus degradans (strain 2-40 / ATCC 43961 / DSM 17024).